The sequence spans 985 residues: Eukaryotic translation initiation factor 4E transporter (985 aa).

Residues 1-24 (MDRRSMGETESGDAFLDLKKPPAS) are disordered. Serine 5 bears the Phosphoserine mark. Positions 30-36 (YTKEELL) match the YXXXXLphi motif motif. Phosphoserine is present on residues serine 74, serine 78, serine 115, serine 120, serine 136, and serine 138. The tract at residues 131–161 (VSSRRSGSPLEKDSDGLRLLGGRRIGSGRII) is interaction with CSDE1. Positions 195-211 (RREFGDSKRVFGERRRN) match the Nuclear localization signal motif. Residues 208–230 (RRRNDSYTEEEPEWFSAGPTSQS) form a disordered region. An interaction with DDX6 region spans residues 219–240 (PEWFSAGPTSQSETIELTGFDD). Phosphoserine occurs at positions 301, 345, 353, and 374. Residue lysine 410 forms a Glycyl lysine isopeptide (Lys-Gly) (interchain with G-Cter in SUMO2) linkage. Position 417 is a phosphoserine (serine 417). The Nuclear export signal motif lies at 438–447 (VEAGLKGLKV). An interaction with LSM14A region spans residues 448-490 (DQQVKNSTPFMAEHLEETLSAVTNNRQLKKDGDMTAFNKLVST). Residue lysine 486 is modified to N6-acetyllysine. Phosphoserine occurs at positions 513, 564, and 587. Residues 613–638 (ITAQMSQLELQQAALEGLALPHDLAV) carry the Nuclear export signal motif. Disordered regions lie at residues 664–693 (QQRV…SMLS) and 707–803 (ESKE…PTTP). Serine 693 carries the post-translational modification Phosphoserine. The tract at residues 695 to 713 (SFTPTSVIRKMYESKEKSK) is interaction with PATL1. Composition is skewed to basic and acidic residues over residues 707–717 (ESKEKSKEEPA) and 725–735 (DSKEDTQKASE). Residues 736 to 746 (ENLLSSSSVPS) show a composition bias toward low complexity. The residue at position 752 (serine 752) is a Phosphoserine. A compositionally biased stretch (polar residues) spans 754-776 (TTNSKLSALQRSSCSTPLSQANR). Phosphoserine is present on residues serine 920 and serine 951. Residues 922 to 953 (QTTPQNVPSRSGLPHMHSQLEHRPSQRSSSPV) are disordered. The tract at residues 940–985 (QLEHRPSQRSSSPVGLAKWFGSDVLQQPLPSMPAKVISVDELEYRQ) is interaction with LSM14A.

The protein belongs to the 4E-T/EIF4E-T family. As to quaternary structure, interacts (via YXXXXLphi motif) with EIF4E. Interacts (via YXXXXLphi motif) with EIF4E2. Interacts with DDX6. Interacts with CSDE1/UNR. Interacts with CNOT1; promoting association with the CCR4-NOT complex. Interacts with LSM14A; promoting EIF4ENIF1 localization to P-bodies. Interacts with PATL1. Interacts with importin beta only in the presence of importin alpha, suggesting a direct interaction with importin alpha. Interacts with APOBEC3G in an RNA-dependent manner. Phosphorylation by MAPK8/JNK1 and or MAPK9/JNK2 in response to oxidative stress promotes P-body assembly. Phosphorylated during meiotic maturation. As to expression, widely expressed.

Its subcellular location is the cytoplasm. The protein localises to the P-body. The protein resides in the nucleus. It localises to the PML body. It is found in the nucleus speckle. Its function is as follows. EIF4E-binding protein that regulates translation and stability of mRNAs in processing bodies (P-bodies). Plays a key role in P-bodies to coordinate the storage of translationally inactive mRNAs in the cytoplasm and prevent their degradation. Acts as a binding platform for multiple RNA-binding proteins: promotes deadenylation of mRNAs via its interaction with the CCR4-NOT complex, and blocks decapping via interaction with eIF4E (EIF4E and EIF4E2), thereby protecting deadenylated and repressed mRNAs from degradation. Component of a multiprotein complex that sequesters and represses translation of proneurogenic factors during neurogenesis. Promotes miRNA-mediated translational repression. Required for the formation of P-bodies. Involved in mRNA translational repression mediated by the miRNA effector TNRC6B by protecting TNRC6B-targeted mRNAs from decapping and subsequent decay. Also acts as a nucleoplasmic shuttling protein, which mediates the nuclear import of EIF4E and DDX6 by a piggy-back mechanism. In Homo sapiens (Human), this protein is Eukaryotic translation initiation factor 4E transporter.